Reading from the N-terminus, the 271-residue chain is Small ribosomal subunit protein uS2 (271 aa).

The protein belongs to the universal ribosomal protein uS2 family.

The sequence is that of Small ribosomal subunit protein uS2 from Wolbachia pipientis subsp. Culex pipiens (strain wPip).